The following is a 656-amino-acid chain: L-type lectin-domain containing receptor kinase S.1 (656 aa).

The signal sequence occupies residues 1-29 (MSWQWRRRQWPSPLLLILIVLHLVSSSSA). Residues 30-273 (IDFLYNSFSS…ARRILAWSLS (244 aa)) are legume-lectin like. Residues 30-304 (IDFLYNSFSS…SSSLSTGAIA (275 aa)) lie on the Extracellular side of the membrane. N-linked (GlcNAc...) asparagine glycosylation is found at N42, N63, N121, N139, N191, N219, N282, and N293. The chain crosses the membrane as a helical span at residues 305-325 (GIVIGCVVFVALIGFGGYLIW). Residues 326–656 (KKLMREEEEE…AAADSTAAHA (331 aa)) are Cytoplasmic-facing. Positions 361–639 (FSNDRLLGSG…LLGSPQEDLL (279 aa)) constitute a Protein kinase domain. Residues 367–375 (LGSGGFGKV) and K389 contribute to the ATP site. Residue D485 is the Proton acceptor of the active site.

This sequence in the C-terminal section; belongs to the protein kinase superfamily. Ser/Thr protein kinase family. In the N-terminal section; belongs to the leguminous lectin family.

The protein resides in the cell membrane. It catalyses the reaction L-seryl-[protein] + ATP = O-phospho-L-seryl-[protein] + ADP + H(+). The catalysed reaction is L-threonyl-[protein] + ATP = O-phospho-L-threonyl-[protein] + ADP + H(+). Involved in resistance response to the pathogenic oomycetes Phytophthora infestans and Phytophthora capsici and to the pathogenic bacteria Pseudomonas syringae. The polypeptide is L-type lectin-domain containing receptor kinase S.1 (Arabidopsis thaliana (Mouse-ear cress)).